We begin with the raw amino-acid sequence, 72 residues long: Translation initiation factor IF-1 2 (72 aa).

An S1-like domain is found at 1 to 72; that stretch reads MAKEELIEFE…TKGRINYRHK (72 aa).

This sequence belongs to the IF-1 family. Component of the 30S ribosomal translation pre-initiation complex which assembles on the 30S ribosome in the order IF-2 and IF-3, IF-1 and N-formylmethionyl-tRNA(fMet); mRNA recruitment can occur at any time during PIC assembly.

The protein localises to the cytoplasm. In terms of biological role, one of the essential components for the initiation of protein synthesis. Stabilizes the binding of IF-2 and IF-3 on the 30S subunit to which N-formylmethionyl-tRNA(fMet) subsequently binds. Helps modulate mRNA selection, yielding the 30S pre-initiation complex (PIC). Upon addition of the 50S ribosomal subunit IF-1, IF-2 and IF-3 are released leaving the mature 70S translation initiation complex. This Ralstonia nicotianae (strain ATCC BAA-1114 / GMI1000) (Ralstonia solanacearum) protein is Translation initiation factor IF-1 2.